We begin with the raw amino-acid sequence, 452 residues long: Serine carboxypeptidase-like 26 (452 aa).

Residues 1 to 20 (MARLLLLFFFFLILLHYASC) form the signal peptide. N-linked (GlcNAc...) asparagine glycans are attached at residues asparagine 52 and asparagine 138. 3 disulfides stabilise this stretch: cysteine 87–cysteine 338, cysteine 244–cysteine 256, and cysteine 280–cysteine 306. The active site involves serine 180. Asparagine 327 is a glycosylation site (N-linked (GlcNAc...) asparagine). Active-site residues include aspartate 375 and histidine 427.

Belongs to the peptidase S10 family. Ubiquitous.

The protein localises to the secreted. Functionally, probable carboxypeptidase. In Arabidopsis thaliana (Mouse-ear cress), this protein is Serine carboxypeptidase-like 26 (SCPL26).